Here is a 244-residue protein sequence, read N- to C-terminus: Exosome complex component Rrp41 (244 aa).

It belongs to the RNase PH family. Rrp41 subfamily. In terms of assembly, component of the archaeal exosome complex. Forms a hexameric ring-like arrangement composed of 3 Rrp41-Rrp42 heterodimers. The hexameric ring associates with a trimer of Rrp4 and/or Csl4 subunits.

The protein localises to the cytoplasm. Functionally, catalytic component of the exosome, which is a complex involved in RNA degradation. Has 3'-&gt;5' exoribonuclease activity. Can also synthesize heteromeric RNA-tails. This is Exosome complex component Rrp41 from Nitrosopumilus maritimus (strain SCM1).